Consider the following 200-residue polypeptide: MALAYDGAIQRLIDSFASLPGIGPKGAQRIAFYLLQAPDAESQRLVDAINEVKEKVRFCEVCGNVCESSPCTICSDPRRDHGTICVVEEPKDVMSIERTREYRGLYQVLGGAINPMANVGPSDLNIAQLLNRLHDGEVKEIIVALNPNIEGEATTTYLSRLLAPLDIKVTRLASGLPVGGDLEYADEITLSRALEGRREV.

The C4-type zinc finger occupies 59-74 (CEVCGNVCESSPCTIC). One can recognise a Toprim domain in the interval 82-177 (GTICVVEEPK…KVTRLASGLP (96 aa)).

It belongs to the RecR family.

May play a role in DNA repair. It seems to be involved in an RecBC-independent recombinational process of DNA repair. It may act with RecF and RecO. The chain is Recombination protein RecR from Bifidobacterium animalis subsp. lactis (strain AD011).